Here is a 337-residue protein sequence, read N- to C-terminus: Phenylalanine--tRNA ligase alpha subunit (337 aa).

Mg(2+) is bound at residue Glu-252.

The protein belongs to the class-II aminoacyl-tRNA synthetase family. Phe-tRNA synthetase alpha subunit type 1 subfamily. In terms of assembly, tetramer of two alpha and two beta subunits. Requires Mg(2+) as cofactor.

Its subcellular location is the cytoplasm. It carries out the reaction tRNA(Phe) + L-phenylalanine + ATP = L-phenylalanyl-tRNA(Phe) + AMP + diphosphate + H(+). This is Phenylalanine--tRNA ligase alpha subunit from Francisella philomiragia subsp. philomiragia (strain ATCC 25017 / CCUG 19701 / FSC 153 / O#319-036).